The primary structure comprises 908 residues: Translation initiation factor IF-2 (908 aa).

2 disordered regions span residues 52–229 (QSHG…AEEA) and 241–316 (AGQY…SAQH). Residues 65–84 (KSKTTSTARVTGSSGKSKSV) are compositionally biased toward polar residues. Composition is skewed to basic and acidic residues over residues 94 to 108 (FEKP…ELAA), 120 to 138 (AAKD…EERQ), 176 to 185 (IEVKPKEQPK), 193 to 229 (PKVE…AEEA), 270 to 280 (SFEKERREIKR), and 294 to 303 (KNQDEREIKN). Positions 409–578 (TRPPVVTIMG…SLQAELMELE (170 aa)) constitute a tr-type G domain. The G1 stretch occupies residues 418-425 (GHVDHGKT). Residue 418–425 (GHVDHGKT) participates in GTP binding. Positions 443-447 (GITQH) are G2. The segment at 464–467 (DTPG) is G3. GTP contacts are provided by residues 464-468 (DTPGH) and 518-521 (NKMD). Positions 518-521 (NKMD) are G4. Residues 554 to 556 (SAK) are G5.

Belongs to the TRAFAC class translation factor GTPase superfamily. Classic translation factor GTPase family. IF-2 subfamily.

The protein localises to the cytoplasm. One of the essential components for the initiation of protein synthesis. Protects formylmethionyl-tRNA from spontaneous hydrolysis and promotes its binding to the 30S ribosomal subunits. Also involved in the hydrolysis of GTP during the formation of the 70S ribosomal complex. The polypeptide is Translation initiation factor IF-2 (Psychrobacter arcticus (strain DSM 17307 / VKM B-2377 / 273-4)).